The primary structure comprises 313 residues: MKEKIVIALGGNAIQTKEATAEAQQTAIRRAMQNLKPLFDSPARIVISHGNGPQIGGLLIQQAKSNSDTTPAMPLDTCGAMSQGMIGYWLETEINRILTEMNSDRTVGTIVTRVEVDKDDPRFDNPTKPIGPFYTKEEVEELQKEQPGSVFKEDAGRGYRKVVASPLPQSILEHQLIRTLADGKNIVIACGGGGIPVIKKENTYEGVEAVIDKDFASEKLATLIEADTLMILTNVENVFINFNEPNQQQIDDIDVATLKKYAAQGKFAEGSMLPKIEAAIRFVESGENKKVIITNLEQAYEALIGNKGTHIHM.

The protein belongs to the carbamate kinase family.

It is found in the cytoplasm. The catalysed reaction is hydrogencarbonate + NH4(+) + ATP = carbamoyl phosphate + ADP + H2O + H(+). It participates in metabolic intermediate metabolism; carbamoyl phosphate degradation; CO(2) and NH(3) from carbamoyl phosphate: step 1/1. In Staphylococcus aureus (strain MRSA252), this protein is Carbamate kinase 2 (arcC2).